A 212-amino-acid chain; its full sequence is Telomere repeats-binding bouquet formation protein 2 (212 aa).

It belongs to the TERB2 family. As to quaternary structure, component of the MAJIN-TERB1-TERB2 complex.

Meiosis-specific telomere-associated protein involved in meiotic telomere attachment to the nucleus inner membrane, a crucial step for homologous pairing and synapsis. Component of the MAJIN-TERB1-TERB2 complex, which promotes telomere cap exchange by mediating attachment of telomeric DNA to the inner nuclear membrane and replacement of the protective cap of telomeric chromosomes: in early meiosis, the MAJIN-TERB1-TERB2 complex associates with telomeric DNA and the shelterin/telosome complex. During prophase, the complex matures and promotes release of the shelterin/telosome complex from telomeric DNA. The chain is Telomere repeats-binding bouquet formation protein 2 from Danio rerio (Zebrafish).